The sequence spans 122 residues: Small ribosomal subunit protein uS13 (122 aa).

The segment at 94-122 (KGLPVRGQRTHTNARTRKGPRRAIAGKKK) is disordered.

Belongs to the universal ribosomal protein uS13 family. Part of the 30S ribosomal subunit. Forms a loose heterodimer with protein S19. Forms two bridges to the 50S subunit in the 70S ribosome.

Located at the top of the head of the 30S subunit, it contacts several helices of the 16S rRNA. In the 70S ribosome it contacts the 23S rRNA (bridge B1a) and protein L5 of the 50S subunit (bridge B1b), connecting the 2 subunits; these bridges are implicated in subunit movement. Contacts the tRNAs in the A and P-sites. The polypeptide is Small ribosomal subunit protein uS13 (Syntrophus aciditrophicus (strain SB)).